The primary structure comprises 832 residues: MFRWSCAFRLSRSLLQTRFLSTDPLLDQFKICLSEDQVFQLVGKNKARLSVTHVGYAINLLWQFQKEKPRMLRTIGQVRGHPEFIALRILAENKIEFMDDKALVEILYNILRFNLEAHDSLVQQLVMEGWRRLERFNLTALSKFAVCLVEQHMNMSPLMGRIASIVDGTLDDVQDARILSSLMVSIYGVISPTLRDRLVDKADSLVDTLDVSHFNHPRRIVQFLRNMKYTYRPLLEKCNSVFLQNVGQMDPENLSIIIGLYQSLQFNNAEFRLMARARLIETMDQCSDVASYTKLFAALGPMAGQDIREKLEEGILTMADEMNPTQLLAILGTMEEMECRNTLLIAKISSLLQKYLESYRPVELARITQAIVTLRCQTPELFSMLQKILERLLKSSFIPADVSMLARVISTLPAARVDEEILSKVDAILPQCSLSDLSSLALAIVKWVRTDQPSRSSTSGGLGNLLLKLNTCGRERIAKIDKIDLFLDELKYTTGDWLEEVLLKDTISTCERLIDQVTWKNVPEFALFITRTNYLCAQVLDKIALVATEDITKIHYSATYATLLPFVVLNYDPPNGEAFFDACIQHFLPHLNSFDPHLVVLLAYSLALAEYFPEELIKAVFNVDFLGRLDAQLETFSSALNMRIRLRLMELNRAVCLECPEFQIPWFHDRYCQQLQHRANGGISSVQRQIHQLLGEILGGINYAKVSVMTPYYHAIDFECILDKNKKPIPYLDQNVLSADLSKVQWGNGGPLQETKSLPPGAQRVAIEFLDSKAFSKNSSNIKGEYVMKKRHLEILGYHVVQIASFEWNSMELSTKDAWIDYLRKRIFADDV.

An RAP domain is found at 765–825; it reads VAIEFLDSKA…KDAWIDYLRK (61 aa).

This sequence belongs to the FAST kinase family.

Its subcellular location is the mitochondrion. Its function is as follows. May regulate the stability of some mitochondrial mRNA species. The protein is FAST kinase domain-containing protein 1, mitochondrial (fastkd1) of Xenopus tropicalis (Western clawed frog).